A 215-amino-acid chain; its full sequence is Ribosome maturation factor RimP (215 aa).

Positions 180–215 (KDNRARKEAKKRRGEPDDDVPEGAEADATEEHEQES) are disordered. Acidic residues predominate over residues 195–207 (PDDDVPEGAEADA).

Belongs to the RimP family.

It localises to the cytoplasm. Functionally, required for maturation of 30S ribosomal subunits. This chain is Ribosome maturation factor RimP, found in Mesorhizobium japonicum (strain LMG 29417 / CECT 9101 / MAFF 303099) (Mesorhizobium loti (strain MAFF 303099)).